The primary structure comprises 224 residues: uncharacterized protein (224 aa).

Residues S9–E68 form the 4Fe-4S domain. Residues C26, C29, C34, and C51 each contribute to the [4Fe-4S] cluster site.

Requires [4Fe-4S] cluster as cofactor.

This is an uncharacterized protein from Methanocaldococcus jannaschii (strain ATCC 43067 / DSM 2661 / JAL-1 / JCM 10045 / NBRC 100440) (Methanococcus jannaschii).